The sequence spans 272 residues: Putative pyruvate, phosphate dikinase regulatory protein (272 aa).

Residue 149–156 (GVSRTSKT) coordinates ADP.

It belongs to the pyruvate, phosphate/water dikinase regulatory protein family. PDRP subfamily.

The catalysed reaction is N(tele)-phospho-L-histidyl/L-threonyl-[pyruvate, phosphate dikinase] + ADP = N(tele)-phospho-L-histidyl/O-phospho-L-threonyl-[pyruvate, phosphate dikinase] + AMP + H(+). It catalyses the reaction N(tele)-phospho-L-histidyl/O-phospho-L-threonyl-[pyruvate, phosphate dikinase] + phosphate + H(+) = N(tele)-phospho-L-histidyl/L-threonyl-[pyruvate, phosphate dikinase] + diphosphate. Its function is as follows. Bifunctional serine/threonine kinase and phosphorylase involved in the regulation of the pyruvate, phosphate dikinase (PPDK) by catalyzing its phosphorylation/dephosphorylation. The chain is Putative pyruvate, phosphate dikinase regulatory protein from Lactiplantibacillus plantarum (strain ATCC BAA-793 / NCIMB 8826 / WCFS1) (Lactobacillus plantarum).